A 190-amino-acid chain; its full sequence is Elongation factor P-like protein (190 aa).

This sequence belongs to the elongation factor P family.

This Shigella dysenteriae serotype 1 (strain Sd197) protein is Elongation factor P-like protein.